The sequence spans 266 residues: 3',5'-cyclic-nucleotide phosphodiesterase alr5338 (266 aa).

Residues Asp14, His16, Asp56, Asn86, His155, His194, and His196 each contribute to the Fe cation site. Residues His16, Asp56, and 86–87 (NH) each bind AMP. His196 lines the AMP pocket.

The protein belongs to the cyclic nucleotide phosphodiesterase class-III family. The cofactor is Fe(2+). It depends on Mn(2+) as a cofactor.

The catalysed reaction is a nucleoside 3',5'-cyclic phosphate + H2O = a nucleoside 5'-phosphate + H(+). It catalyses the reaction 3',5'-cyclic AMP + H2O = AMP + H(+). It carries out the reaction 3',5'-cyclic GMP + H2O = GMP + H(+). With respect to regulation, activated by iron and manganese. Hydrolyzes cAMP to 5'-AMP. Plays an important regulatory role in modulating the intracellular concentration of cAMP, thereby influencing cAMP-dependent processes. Can also hydrolyze cGMP. This is 3',5'-cyclic-nucleotide phosphodiesterase alr5338 from Nostoc sp. (strain PCC 7120 / SAG 25.82 / UTEX 2576).